The sequence spans 1588 residues: Pentafunctional AROM polypeptide (1588 aa).

Residues 1–392 are 3-dehydroquinate synthase; that stretch reads MVQLAKVPIL…YGDSAQFVSD (392 aa). NAD(+) is bound by residues 43 to 45, 78 to 81, 109 to 111, and aspartate 114; these read DTN, ETSK, and GGV. Arginine 125 is a binding site for 7-phospho-2-dehydro-3-deoxy-D-arabino-heptonate. 134-135 is a binding site for NAD(+); sequence TS. Aspartate 141 and lysine 147 together coordinate 7-phospho-2-dehydro-3-deoxy-D-arabino-heptonate. Residue lysine 156 coordinates NAD(+). Residue asparagine 157 coordinates 7-phospho-2-dehydro-3-deoxy-D-arabino-heptonate. NAD(+) contacts are provided by residues 174–177 and asparagine 185; that span reads WLET. Position 189 (glutamate 189) interacts with Zn(2+). 7-phospho-2-dehydro-3-deoxy-D-arabino-heptonate contacts are provided by residues 189–192 and lysine 258; that span reads EVIK. Glutamate 268 functions as the Proton acceptor; for 3-dehydroquinate synthase activity in the catalytic mechanism. 7-phospho-2-dehydro-3-deoxy-D-arabino-heptonate contacts are provided by residues 272–276 and histidine 279; that span reads RNLLN. Histidine 279 provides a ligand contact to Zn(2+). The active-site Proton acceptor; for 3-dehydroquinate synthase activity is the histidine 283. The 7-phospho-2-dehydro-3-deoxy-D-arabino-heptonate site is built by histidine 295 and lysine 364. Histidine 295 provides a ligand contact to Zn(2+). Residues 405–871 are EPSP synthase; that stretch reads VYPFKDIPAD…WDVLHSELGA (467 aa). Cysteine 853 acts as the For EPSP synthase activity in catalysis. The interval 890–1080 is shikimate kinase; it reads SVVIIGMRAA…IPSGRSAFVC (191 aa). ATP is bound at residue 895–902; the sequence is GMRAAGKT. A 3-dehydroquinase region spans residues 1081–1293; the sequence is LTFDDLTEQT…AAPGQLTVAQ (213 aa). Histidine 1198 (proton acceptor; for 3-dehydroquinate dehydratase activity) is an active-site residue. Lysine 1227 functions as the Schiff-base intermediate with substrate; for 3-dehydroquinate dehydratase activity in the catalytic mechanism. Residues 1306–1588 are shikimate dehydrogenase; the sequence is PKELFVVGKP…KAIFDAVTKE (283 aa).

In the N-terminal section; belongs to the sugar phosphate cyclases superfamily. Dehydroquinate synthase family. The protein in the 2nd section; belongs to the EPSP synthase family. This sequence in the 3rd section; belongs to the shikimate kinase family. It in the 4th section; belongs to the type-I 3-dehydroquinase family. In the C-terminal section; belongs to the shikimate dehydrogenase family. As to quaternary structure, homodimer. The cofactor is Zn(2+).

Its subcellular location is the cytoplasm. It catalyses the reaction 7-phospho-2-dehydro-3-deoxy-D-arabino-heptonate = 3-dehydroquinate + phosphate. The enzyme catalyses 3-dehydroquinate = 3-dehydroshikimate + H2O. The catalysed reaction is shikimate + NADP(+) = 3-dehydroshikimate + NADPH + H(+). It carries out the reaction shikimate + ATP = 3-phosphoshikimate + ADP + H(+). It catalyses the reaction 3-phosphoshikimate + phosphoenolpyruvate = 5-O-(1-carboxyvinyl)-3-phosphoshikimate + phosphate. It functions in the pathway metabolic intermediate biosynthesis; chorismate biosynthesis; chorismate from D-erythrose 4-phosphate and phosphoenolpyruvate: step 2/7. It participates in metabolic intermediate biosynthesis; chorismate biosynthesis; chorismate from D-erythrose 4-phosphate and phosphoenolpyruvate: step 3/7. Its pathway is metabolic intermediate biosynthesis; chorismate biosynthesis; chorismate from D-erythrose 4-phosphate and phosphoenolpyruvate: step 4/7. The protein operates within metabolic intermediate biosynthesis; chorismate biosynthesis; chorismate from D-erythrose 4-phosphate and phosphoenolpyruvate: step 5/7. It functions in the pathway metabolic intermediate biosynthesis; chorismate biosynthesis; chorismate from D-erythrose 4-phosphate and phosphoenolpyruvate: step 6/7. The AROM polypeptide catalyzes 5 consecutive enzymatic reactions in prechorismate polyaromatic amino acid biosynthesis. This chain is Pentafunctional AROM polypeptide, found in Saccharomyces cerevisiae (strain RM11-1a) (Baker's yeast).